We begin with the raw amino-acid sequence, 492 residues long: Catalase isozyme 1 (492 aa).

Catalysis depends on residues histidine 65 and asparagine 138. Tyrosine 348 lines the heme pocket.

This sequence belongs to the catalase family. As to quaternary structure, homotetramer. It depends on heme as a cofactor. High expression in seeds and early seedlings.

It is found in the glyoxysome. It carries out the reaction 2 H2O2 = O2 + 2 H2O. Occurs in almost all aerobically respiring organisms and serves to protect cells from the toxic effects of hydrogen peroxide. The sequence is that of Catalase isozyme 1 (CAT1) from Cucurbita pepo (Vegetable marrow).